We begin with the raw amino-acid sequence, 447 residues long: Tubulin beta chain (447 aa).

Residues glutamine 11, glutamate 69, serine 138, glycine 142, threonine 143, glycine 144, asparagine 204, and asparagine 226 each coordinate GTP. Glutamate 69 provides a ligand contact to Mg(2+). The disordered stretch occupies residues 421 to 447 (EYQQYQDASISEGEEEYEEEAPMEPEE). The segment covering 432–447 (EGEEEYEEEAPMEPEE) has biased composition (acidic residues).

This sequence belongs to the tubulin family. In terms of assembly, dimer of alpha and beta chains. A typical microtubule is a hollow water-filled tube with an outer diameter of 25 nm and an inner diameter of 15 nM. Alpha-beta heterodimers associate head-to-tail to form protofilaments running lengthwise along the microtubule wall with the beta-tubulin subunit facing the microtubule plus end conferring a structural polarity. Microtubules usually have 13 protofilaments but different protofilament numbers can be found in some organisms and specialized cells. Mg(2+) serves as cofactor.

It localises to the cytoplasm. The protein resides in the cytoskeleton. Its function is as follows. Tubulin is the major constituent of microtubules, a cylinder consisting of laterally associated linear protofilaments composed of alpha- and beta-tubulin heterodimers. Microtubules grow by the addition of GTP-tubulin dimers to the microtubule end, where a stabilizing cap forms. Below the cap, tubulin dimers are in GDP-bound state, owing to GTPase activity of alpha-tubulin. This is Tubulin beta chain from Rhynchosporium secalis (Barley scald fungus).